The chain runs to 497 residues: Kynureninase (497 aa).

The segment at 59-86 (GRLPAYPPNHAKPGETATAQNGTSNTND) is disordered. Polar residues predominate over residues 75 to 86 (ATAQNGTSNTND). Residues Leu-166, Thr-167, 194-197 (FPSD), Asp-278, His-281, and Tyr-303 each bind pyridoxal 5'-phosphate. Residue Lys-304 is modified to N6-(pyridoxal phosphate)lysine. Residues Trp-337 and Asn-365 each coordinate pyridoxal 5'-phosphate.

Belongs to the kynureninase family. As to quaternary structure, homodimer. The cofactor is pyridoxal 5'-phosphate.

It localises to the cytoplasm. The enzyme catalyses L-kynurenine + H2O = anthranilate + L-alanine + H(+). It catalyses the reaction 3-hydroxy-L-kynurenine + H2O = 3-hydroxyanthranilate + L-alanine + H(+). It participates in amino-acid degradation; L-kynurenine degradation; L-alanine and anthranilate from L-kynurenine: step 1/1. It functions in the pathway cofactor biosynthesis; NAD(+) biosynthesis; quinolinate from L-kynurenine: step 2/3. Functionally, catalyzes the cleavage of L-kynurenine (L-Kyn) and L-3-hydroxykynurenine (L-3OHKyn) into anthranilic acid (AA) and 3-hydroxyanthranilic acid (3-OHAA), respectively. The protein is Kynureninase of Pyricularia oryzae (strain 70-15 / ATCC MYA-4617 / FGSC 8958) (Rice blast fungus).